We begin with the raw amino-acid sequence, 445 residues long: Proline--tRNA ligase (445 aa).

This sequence belongs to the class-II aminoacyl-tRNA synthetase family. ProS type 2 subfamily. In terms of assembly, homodimer.

Its subcellular location is the cytoplasm. It catalyses the reaction tRNA(Pro) + L-proline + ATP = L-prolyl-tRNA(Pro) + AMP + diphosphate. In terms of biological role, catalyzes the attachment of proline to tRNA(Pro) in a two-step reaction: proline is first activated by ATP to form Pro-AMP and then transferred to the acceptor end of tRNA(Pro). This Cereibacter sphaeroides (strain ATCC 17025 / ATH 2.4.3) (Rhodobacter sphaeroides) protein is Proline--tRNA ligase.